The primary structure comprises 209 residues: UPF0319 protein VF_1616 (209 aa).

The first 21 residues, 1-21 (MKIQSIFAASFCLLSSISAHA), serve as a signal peptide directing secretion.

It belongs to the UPF0319 family.

The protein is UPF0319 protein VF_1616 of Aliivibrio fischeri (strain ATCC 700601 / ES114) (Vibrio fischeri).